Consider the following 456-residue polypeptide: Probable glycine dehydrogenase (decarboxylating) subunit 1 (456 aa).

The protein belongs to the GcvP family. N-terminal subunit subfamily. The glycine cleavage system is composed of four proteins: P, T, L and H. In this organism, the P 'protein' is a heterodimer of two subunits.

The enzyme catalyses N(6)-[(R)-lipoyl]-L-lysyl-[glycine-cleavage complex H protein] + glycine + H(+) = N(6)-[(R)-S(8)-aminomethyldihydrolipoyl]-L-lysyl-[glycine-cleavage complex H protein] + CO2. Its function is as follows. The glycine cleavage system catalyzes the degradation of glycine. The P protein binds the alpha-amino group of glycine through its pyridoxal phosphate cofactor; CO(2) is released and the remaining methylamine moiety is then transferred to the lipoamide cofactor of the H protein. In Rhizorhabdus wittichii (strain DSM 6014 / CCUG 31198 / JCM 15750 / NBRC 105917 / EY 4224 / RW1) (Sphingomonas wittichii), this protein is Probable glycine dehydrogenase (decarboxylating) subunit 1.